We begin with the raw amino-acid sequence, 110 residues long: Protein YcgL (110 aa).

The YcgL domain occupies 14–98 (MFCVIYRSSK…PPEDLLKQHL (85 aa)). The disordered stretch occupies residues 87-110 (PPPPEDLLKQHLSSVGQNTSPADR). Residues 97–110 (HLSSVGQNTSPADR) are compositionally biased toward polar residues.

This chain is Protein YcgL, found in Salmonella choleraesuis (strain SC-B67).